The following is a 215-amino-acid chain: Soluble inorganic pyrophosphatase (215 aa).

The segment covering 1 to 21 has biased composition (low complexity); it reads MSQEDSTSAAAAQQPTSRPAP. The interval 1–24 is disordered; it reads MSQEDSTSAAAAQQPTSRPAPKLN. Mg(2+) contacts are provided by Asp103, Asp108, and Asp140.

It belongs to the PPase family. The cofactor is Mg(2+). As to expression, expressed in metabolically active tissue such as root, shoot, embryo and aleurone.

The protein resides in the cytoplasm. It carries out the reaction diphosphate + H2O = 2 phosphate + H(+). In terms of biological role, may play a role in germination. This chain is Soluble inorganic pyrophosphatase (IPP), found in Hordeum vulgare subsp. vulgare (Domesticated barley).